We begin with the raw amino-acid sequence, 89 residues long: Small ribosomal subunit protein bS20 (89 aa).

Belongs to the bacterial ribosomal protein bS20 family.

Its function is as follows. Binds directly to 16S ribosomal RNA. The polypeptide is Small ribosomal subunit protein bS20 (Helicobacter pylori (strain ATCC 700392 / 26695) (Campylobacter pylori)).